Here is a 255-residue protein sequence, read N- to C-terminus: H-2 class II histocompatibility antigen, E-K alpha chain (255 aa).

An N-terminal signal peptide occupies residues 1-25 (MATIGALVLRFFFIAVLMSSQKSWA). An alpha-1 region spans residues 26–109 (IKEEHTIIQA…ERSNNTPDAN (84 aa)). At 26–216 (IKEEHTIIQA…EKTLLPETKE (191 aa)) the chain is on the extracellular side. Positions 110–203 (VAPEVTVLSR…GLEEPLRKHW (94 aa)) are alpha-2. Positions 112–204 (PEVTVLSRSP…LEEPLRKHWE (93 aa)) constitute an Ig-like C1-type domain. Cysteines 132 and 188 form a disulfide. N-linked (GlcNAc...) asparagine glycosylation is present at Asn-143. Residues 204–216 (EFEEKTLLPETKE) are connecting peptide. A helical membrane pass occupies residues 217–242 (NVVCALGLFVGLVGIVVGIILIMKGI). At 243 to 255 (KKRNVVERRQGAL) the chain is on the cytoplasmic side.

It belongs to the MHC class II family.

It is found in the membrane. The chain is H-2 class II histocompatibility antigen, E-K alpha chain from Mus musculus (Mouse).